Consider the following 285-residue polypeptide: Tumor necrosis factor ligand superfamily member 13B (285 aa).

The Cytoplasmic portion of the chain corresponds to 1–46 (MDDSTEREQSRLTSCLKKREEMKLKECVSILPRKESPSVRSSKDGK). The helical; Signal-anchor for type II membrane protein transmembrane segment at 47–67 (LLAATLLLALLSCCLTVVSFY) threads the bilayer. At 68–285 (QVAALQGDLA…VTFFGALKLL (218 aa)) the chain is on the extracellular side. Residues 114 to 138 (IFEPPAPGEGNSSQNSRNKRAVQGP) are disordered. N-linked (GlcNAc...) asparagine glycosylation occurs at Asn-124. Positions 145–284 (DCLQLIADSE…DVTFFGALKL (140 aa)) constitute a THD domain. A disulfide bridge connects residues Cys-232 and Cys-245. Asn-242 carries N-linked (GlcNAc...) (high mannose) asparagine glycosylation.

The protein belongs to the tumor necrosis factor family. As to quaternary structure, homotrimer. Isoform 2 heteromultimerizes with isoform 1, probably limiting the amount of functional isoform 1 on the cell surface. Isoform 3 is unlikely form trimers or bind to BAFF receptors. The soluble form derives from the membrane form by proteolytic processing. In terms of processing, isoform 2 is not efficiently shed from the membrane unlike isoform 1. Post-translationally, N-glycosylated. Abundantly expressed in peripheral blood Leukocytes and is specifically expressed in monocytes and macrophages. Also found in the spleen, lymph node, bone marrow, T-cells and dendritic cells. A lower expression seen in placenta, heart, lung, fetal liver, thymus, and pancreas. Isoform 2 is expressed in many myeloid cell lines.

The protein localises to the cell membrane. It is found in the secreted. Its function is as follows. Cytokine that binds to TNFRSF13B/TACI and TNFRSF17/BCMA. TNFSF13/APRIL binds to the same 2 receptors. Together, they form a 2 ligands -2 receptors pathway involved in the stimulation of B- and T-cell function and the regulation of humoral immunity. A third B-cell specific BAFF-receptor (BAFFR/BR3) promotes the survival of mature B-cells and the B-cell response. In terms of biological role, isoform 2 seems to inhibit isoform 1 secretion and bioactivity. Acts as a transcription factor for its own parent gene, in association with NF-kappa-B p50 subunit, at least in autoimmune and proliferative B-cell diseases. The presence of Delta4BAFF is essential for soluble BAFF release by IFNG/IFN-gamma-stimulated monocytes and for B-cell survival. It can directly or indirectly regulate the differential expression of a large number of genes involved in the innate immune response and the regulation of apoptosis. In Homo sapiens (Human), this protein is Tumor necrosis factor ligand superfamily member 13B (TNFSF13B).